The primary structure comprises 367 residues: Cycloaraneosene synthase sdnA (367 aa).

Positions 1-24 are cleaved as a signal peptide; the sequence is MSLYGLFTLATSYLPSVGGGAALA. Mg(2+) contacts are provided by aspartate 115, asparagine 260, and serine 264. A DDXXD motif motif is present at residues 115 to 119; sequence DDQFD. Asparagine 276 is a glycosylation site (N-linked (GlcNAc...) asparagine).

The protein belongs to the terpene synthase family. It depends on Mg(2+) as a cofactor.

The catalysed reaction is (2E,6E,10E)-geranylgeranyl diphosphate = cycloaraneosene + diphosphate. The protein operates within antibiotic biosynthesis. Functionally, cycloaraneosene synthase; part of the gene cluster that mediates the biosynthesis of sordarin and hypoxysordarin, glycoside antibiotics with a unique tetracyclic diterpene aglycone structure. First, the geranylgeranyl diphosphate synthase sdnC constructs GGDP from farnesyl diphosphate and isopentenyl diphosphate. The diterpene cyclase sdnA then catalyzes the cyclization of GGDP to afford cycloaraneosene. Cycloaraneosene is then hydroxylated four times by the putative cytochrome P450 monooxygenases sdnB, sdnE, sdnF and sdnH to give a hydroxylated cycloaraneosene derivative such as cycloaraneosene-8,9,13,19-tetraol. Although the order of the hydroxylations is unclear, at least C8, C9 and C13 of the cycloaraneosene skeleton are hydroxylated before the sordaricin formation. Dehydration of the 13-hydroxy group of the hydroxylated cycloaraneosene derivative might be catalyzed by an unassigned hypothetical protein such as sdnG and sdnP to construct the cyclopentadiene moiety. The FAD-dependent oxidoreductase sdnN is proposed to catalyze the oxidation at C9 of the hydroxylated cycloaraneosene derivative and also catalyze the Baeyer-Villiger oxidation to give the lactone intermediate. The presumed lactone intermediate would be hydrolyzed to give an acrolein moiety and a carboxylate moiety. Then, [4+2]cycloaddition would occur between the acrolein moiety and the cyclopentadiene moiety to give sordaricin. SdnN might also be involved in the [4+2]cycloaddition after the hypothesized oxidation to accommodate the oxidized product and prompt the [4+2]cycloaddition. GDP-6-deoxy-D-altrose may be biosynthesized from GDP-D-mannose by the putative GDP-mannose-4,6-dehydratase sdnI and the short-chain dehydrogenase sdnK. The glycosyltransferase sdnJ catalyzes the attachment of 6-deoxy-D-altrose onto the 19-hydroxy group of sordaricin to give 4'-O-demethylsordarin. The methyltransferase sdnD would complete the biosynthesis of sordarin. Sordarin can be further modified into hypoxysordarin. The unique acyl chain at the 3'-hydroxy group of hypoxysordarin would be constructed by an iterative type I PKS sdnO and the trans-acting polyketide methyltransferase sdnL. SdnL would be responsible for the introduction of an alpha-methyl group of the polyketide chain. Alternatively, the beta-lactamase-like protein sdnR might be responsible for the cleavage and transfer of the polyketide chain from the PKS sdnO to sordarin. Two putative cytochrome P450 monooxygenases, sdnQ and sdnT, might catalyze the epoxidations of the polyketide chain to complete the biosynthesis of hypoxysordarin. Transcriptional regulators sdnM and sdnS are presumably encoded for the transcriptional regulation of the expression of the sdn gene cluster. This is Cycloaraneosene synthase sdnA from Sordaria araneosa (Pleurage araneosa).